Reading from the N-terminus, the 715-residue chain is Eukaryotic peptide chain release factor GTP-binding subunit (715 aa).

Polar residues predominate over residues Met1–Lys12. Disordered stretches follow at residues Met1–Lys148 and Ala168–Ala262. The several sort of repeats stretch occupies residues Ser5–Gln128. The segment covering Gln13–Gln25 has biased composition (low complexity). The span at Asn26–Val37 shows a compositional bias: polar residues. Composition is skewed to low complexity over residues Gln39–Gly129 and Ser176–Pro198. The interval Gly129–Asp285 is charged. Composition is skewed to basic and acidic residues over residues Gln199–Ala208 and Glu218–Ala233. Residues Lys290–Arg515 form the tr-type G domain. Residues Gly299–Ser306 form a G1 region. Position 299–306 (Gly299–Ser306) interacts with GTP. The interval Gly355–Glu359 is G2. At Thr373 the chain carries Phosphothreonine. Residues Asp376–Gly379 are G3. Residues Asp376 to His380 and Asn438 to Asp441 contribute to the GTP site. A G4 region spans residues Asn438–Asp441. Residues Ser479–Tyr481 form a G5 region.

It belongs to the TRAFAC class translation factor GTPase superfamily. Classic translation factor GTPase family. ERF3 subfamily.

It localises to the cytoplasm. Its function is as follows. Involved in translation termination. Stimulates the activity of ERF1. Binds guanine nucleotides. The chain is Eukaryotic peptide chain release factor GTP-binding subunit (SUP35) from Candida albicans (Yeast).